Reading from the N-terminus, the 207-residue chain is ATP-dependent Clp protease proteolytic subunit (207 aa).

Ser-111 (nucleophile) is an active-site residue. His-136 is an active-site residue.

The protein belongs to the peptidase S14 family. In terms of assembly, fourteen ClpP subunits assemble into 2 heptameric rings which stack back to back to give a disk-like structure with a central cavity, resembling the structure of eukaryotic proteasomes.

The protein localises to the cytoplasm. The catalysed reaction is Hydrolysis of proteins to small peptides in the presence of ATP and magnesium. alpha-casein is the usual test substrate. In the absence of ATP, only oligopeptides shorter than five residues are hydrolyzed (such as succinyl-Leu-Tyr-|-NHMec, and Leu-Tyr-Leu-|-Tyr-Trp, in which cleavage of the -Tyr-|-Leu- and -Tyr-|-Trp bonds also occurs).. Cleaves peptides in various proteins in a process that requires ATP hydrolysis. Has a chymotrypsin-like activity. Plays a major role in the degradation of misfolded proteins. The protein is ATP-dependent Clp protease proteolytic subunit of Yersinia enterocolitica serotype O:8 / biotype 1B (strain NCTC 13174 / 8081).